The sequence spans 48 residues: Phosphatidylserine decarboxylase proenzyme (48 aa).

Belongs to the phosphatidylserine decarboxylase family. Type 1 subfamily. Pyruvate serves as cofactor.

The enzyme catalyses a 1,2-diacyl-sn-glycero-3-phospho-L-serine + H(+) = a 1,2-diacyl-sn-glycero-3-phosphoethanolamine + CO2. Its pathway is phospholipid metabolism; phosphatidylethanolamine biosynthesis; phosphatidylethanolamine from CDP-diacylglycerol: step 2/2. The sequence is that of Phosphatidylserine decarboxylase proenzyme (psd) from Azotobacter vinelandii.